The following is a 283-amino-acid chain: Endochitinase At2g43620 (283 aa).

The N-terminal stretch at 1–28 is a signal peptide; the sequence is MATLRAMLKNAFILFLFTLTIMAKTVFS. Residues 29–66 enclose the Chitin-binding type-1 domain; it reads QQCGTTGCAANLCCSRYGYCGTTDAYCGTGCRSGPCSS. 4 cysteine pairs are disulfide-bonded: C31–C42, C36–C48, C41–C55, and C59–C64. The tract at residues 88-283 is catalytic; it reads DTIENVVTPA…GITPGANLSC (196 aa). The active-site Proton donor is E150. N280 carries N-linked (GlcNAc...) asparagine glycosylation.

This sequence belongs to the glycosyl hydrolase 19 family. Chitinase class I subfamily.

The enzyme catalyses Random endo-hydrolysis of N-acetyl-beta-D-glucosaminide (1-&gt;4)-beta-linkages in chitin and chitodextrins.. This Arabidopsis thaliana (Mouse-ear cress) protein is Endochitinase At2g43620.